We begin with the raw amino-acid sequence, 21 residues long: Major outer membrane protein (21 aa).

In terms of assembly, disulfide bond interactions within and between MOMP molecules and other components form high molecular-weight oligomers.

It localises to the cell outer membrane. Functionally, structural rigidity of the outer membrane of elementary bodies and porin forming, permitting diffusion of solutes through the intracellular reticulate body membrane. This is Major outer membrane protein from Actinobacillus suis.